The following is a 1081-amino-acid chain: FHIP family protein GA25918 (1081 aa).

Over residues 1–11 (MSWLRSSPLRQ) the composition is skewed to polar residues. Disordered stretches follow at residues 1 to 31 (MSWL…GSLR), 504 to 524 (ARPK…EQPI), 650 to 685 (ADEE…MGGG), 830 to 913 (NENS…AASS), and 933 to 1027 (NNNN…SEPA). Residue S508 is modified to Phosphoserine. Positions 657-668 (TDLTVTTTTASE) are enriched in low complexity. S833 carries the post-translational modification Phosphoserine. Residues 840–856 (QPQTTLSQQQQQQQGQQ) show a composition bias toward low complexity. Positions 857 to 876 (RSAYATLSAATPVQATQTSA) are enriched in polar residues. 2 stretches are compositionally biased toward low complexity: residues 891–913 (SKSI…AASS) and 933–953 (NNNN…GTGT). The span at 954 to 963 (CETSLSTNPQ) shows a compositional bias: polar residues. Over residues 964 to 993 (SGAAAARSTGTATTANGNSSNSNISIGGST) the composition is skewed to low complexity. Residues 994–1010 (QTLSGHSNTTTYSSSTL) are compositionally biased toward polar residues.

It belongs to the FHIP family.

The sequence is that of FHIP family protein GA25918 from Drosophila pseudoobscura pseudoobscura (Fruit fly).